Reading from the N-terminus, the 234-residue chain is Small ribosomal subunit protein uS2c (234 aa).

The protein belongs to the universal ribosomal protein uS2 family.

The protein localises to the plastid. Its subcellular location is the chloroplast. In Pinus thunbergii (Japanese black pine), this protein is Small ribosomal subunit protein uS2c (rps2).